A 119-amino-acid polypeptide reads, in one-letter code: MFGVGIDIIEIDRIRKSYQTYGDRFLKKIFTEGERVYCFSKSNPYASLAARFAAKEAVAKALGTGIGKLLKWKEIEMCRDSRQPQVVVPEALLCSLGVKRVLLSVSHSREYATAVAIAE.

Positions 7 and 56 each coordinate Mg(2+).

This sequence belongs to the P-Pant transferase superfamily. AcpS family. Mg(2+) serves as cofactor.

It is found in the cytoplasm. The enzyme catalyses apo-[ACP] + CoA = holo-[ACP] + adenosine 3',5'-bisphosphate + H(+). Functionally, transfers the 4'-phosphopantetheine moiety from coenzyme A to a Ser of acyl-carrier-protein. The protein is Holo-[acyl-carrier-protein] synthase of Chlamydia trachomatis serovar D (strain ATCC VR-885 / DSM 19411 / UW-3/Cx).